The following is a 292-amino-acid chain: uncharacterized protein (292 aa).

Residues 175–197 (VLNFYFTALPYAIDGIISGIGVF) traverse the membrane as a helical segment.

It localises to the membrane. This is an uncharacterized protein from Methanocaldococcus jannaschii (strain ATCC 43067 / DSM 2661 / JAL-1 / JCM 10045 / NBRC 100440) (Methanococcus jannaschii).